The sequence spans 219 residues: uncharacterized protein (219 aa).

Residues 30–107 form the RRM domain; the sequence is FRLFVGNLGN…RPVKLSRATS (78 aa). The span at 140 to 149 shows a compositional bias: basic residues; that stretch reads KKIKNKHGKN. Residues 140-219 form a disordered region; it reads KKIKNKHGKN…YSRASSFRRV (80 aa). Over residues 150-169 the composition is skewed to low complexity; it reads SSKSSRAAQSAAAELISSSS. Polar residues predominate over residues 176 to 186; it reads ANSTSVPNAVN.

This is an uncharacterized protein from Schizosaccharomyces pombe (strain 972 / ATCC 24843) (Fission yeast).